The following is a 1588-amino-acid chain: Pentafunctional AROM polypeptide (1588 aa).

The 3-dehydroquinate synthase stretch occupies residues 1–392 (MVQLAKVPIL…YGDSAQFVSD (392 aa)). Residues 43 to 45 (DTN), 78 to 81 (ETSK), 109 to 111 (GGV), and aspartate 114 each bind NAD(+). Arginine 125 contacts 7-phospho-2-dehydro-3-deoxy-D-arabino-heptonate. 134-135 (TS) is an NAD(+) binding site. Positions 141 and 147 each coordinate 7-phospho-2-dehydro-3-deoxy-D-arabino-heptonate. Position 156 (lysine 156) interacts with NAD(+). Position 157 (asparagine 157) interacts with 7-phospho-2-dehydro-3-deoxy-D-arabino-heptonate. NAD(+)-binding positions include 174–177 (WLET) and asparagine 185. Glutamate 189 provides a ligand contact to Zn(2+). 7-phospho-2-dehydro-3-deoxy-D-arabino-heptonate-binding positions include 189 to 192 (EVIK) and lysine 258. Glutamate 268 (proton acceptor; for 3-dehydroquinate synthase activity) is an active-site residue. 7-phospho-2-dehydro-3-deoxy-D-arabino-heptonate-binding positions include 272–276 (RNLLN) and histidine 279. Histidine 279 contributes to the Zn(2+) binding site. Histidine 283 (proton acceptor; for 3-dehydroquinate synthase activity) is an active-site residue. 7-phospho-2-dehydro-3-deoxy-D-arabino-heptonate contacts are provided by histidine 295 and lysine 364. Position 295 (histidine 295) interacts with Zn(2+). The EPSP synthase stretch occupies residues 405 to 871 (VYPFKDIPAD…WDVLHSELGA (467 aa)). The active-site For EPSP synthase activity is cysteine 853. Residues 890–1080 (SVVIIGMRAA…IPSGRSAFVC (191 aa)) form a shikimate kinase region. 895 to 902 (GMRAAGKT) contacts ATP. The 3-dehydroquinase stretch occupies residues 1081 to 1293 (LTFDDLTEQT…AAPGQLTVAQ (213 aa)). Residue histidine 1198 is the Proton acceptor; for 3-dehydroquinate dehydratase activity of the active site. Lysine 1227 (schiff-base intermediate with substrate; for 3-dehydroquinate dehydratase activity) is an active-site residue. The segment at 1306 to 1588 (PKELFVVGKP…KAIFDAVTKE (283 aa)) is shikimate dehydrogenase.

This sequence in the N-terminal section; belongs to the sugar phosphate cyclases superfamily. Dehydroquinate synthase family. It in the 2nd section; belongs to the EPSP synthase family. In the 3rd section; belongs to the shikimate kinase family. The protein in the 4th section; belongs to the type-I 3-dehydroquinase family. This sequence in the C-terminal section; belongs to the shikimate dehydrogenase family. Homodimer. Zn(2+) serves as cofactor.

It localises to the cytoplasm. It catalyses the reaction 7-phospho-2-dehydro-3-deoxy-D-arabino-heptonate = 3-dehydroquinate + phosphate. The catalysed reaction is 3-dehydroquinate = 3-dehydroshikimate + H2O. It carries out the reaction shikimate + NADP(+) = 3-dehydroshikimate + NADPH + H(+). The enzyme catalyses shikimate + ATP = 3-phosphoshikimate + ADP + H(+). It catalyses the reaction 3-phosphoshikimate + phosphoenolpyruvate = 5-O-(1-carboxyvinyl)-3-phosphoshikimate + phosphate. It functions in the pathway metabolic intermediate biosynthesis; chorismate biosynthesis; chorismate from D-erythrose 4-phosphate and phosphoenolpyruvate: step 2/7. It participates in metabolic intermediate biosynthesis; chorismate biosynthesis; chorismate from D-erythrose 4-phosphate and phosphoenolpyruvate: step 3/7. Its pathway is metabolic intermediate biosynthesis; chorismate biosynthesis; chorismate from D-erythrose 4-phosphate and phosphoenolpyruvate: step 4/7. The protein operates within metabolic intermediate biosynthesis; chorismate biosynthesis; chorismate from D-erythrose 4-phosphate and phosphoenolpyruvate: step 5/7. It functions in the pathway metabolic intermediate biosynthesis; chorismate biosynthesis; chorismate from D-erythrose 4-phosphate and phosphoenolpyruvate: step 6/7. In terms of biological role, the AROM polypeptide catalyzes 5 consecutive enzymatic reactions in prechorismate polyaromatic amino acid biosynthesis. The polypeptide is Pentafunctional AROM polypeptide (Saccharomyces cerevisiae (strain Lalvin EC1118 / Prise de mousse) (Baker's yeast)).